Reading from the N-terminus, the 448-residue chain is Delta(14)-sterol reductase ERG24 (448 aa).

The next 7 membrane-spanning stretches (helical) occupy residues 18-38, 75-95, 108-128, 157-177, 251-271, 279-299, and 318-338; these read ISGA…FYLL, CWSA…LLPG, VLNY…LLLA, IIIC…ISFI, VTDS…DGVL, MIDI…LAWV, and NLGW…FYIF. Residues lysine 345, arginine 349, leucine 368, tryptophan 373, and 380–381 each bind NADP(+); that span reads NY. Residues 394–414 traverse the membrane as a helical segment; the sequence is PTGFQTPLTYFYVIYFASLLI. NADP(+)-binding positions include aspartate 420, 424–428, and tyrosine 435; that span reads CRAKY.

The protein belongs to the ERG4/ERG24 family.

The protein resides in the endoplasmic reticulum membrane. The catalysed reaction is 4,4-dimethyl-5alpha-cholesta-8,24-dien-3beta-ol + NADP(+) = 4,4-dimethyl-5alpha-cholesta-8,14,24-trien-3beta-ol + NADPH + H(+). It functions in the pathway steroid biosynthesis; zymosterol biosynthesis; zymosterol from lanosterol: step 2/6. C-14 sterol reductase; part of the third module of ergosterol biosynthesis pathway that includes the late steps of the pathway. ERG24 reduces the C14=C15 double bond of 4,4-dimethyl-cholesta-8,14,24-trienol to produce 4,4-dimethyl-cholesta-8,24-dienol. The third module or late pathway involves the ergosterol synthesis itself through consecutive reactions that mainly occur in the endoplasmic reticulum (ER) membrane. Firstly, the squalene synthase ERG9 catalyzes the condensation of 2 farnesyl pyrophosphate moieties to form squalene, which is the precursor of all steroids. Squalene synthase is crucial for balancing the incorporation of farnesyl diphosphate (FPP) into sterol and nonsterol isoprene synthesis. Secondly, the squalene epoxidase ERG1 catalyzes the stereospecific oxidation of squalene to (S)-2,3-epoxysqualene, which is considered to be a rate-limiting enzyme in steroid biosynthesis. Then, the lanosterol synthase ERG7 catalyzes the cyclization of (S)-2,3 oxidosqualene to lanosterol, a reaction that forms the sterol core. In the next steps, lanosterol is transformed to zymosterol through a complex process involving various demethylation, reduction and desaturation reactions. The lanosterol 14-alpha-demethylase ERG11 (also known as CYP51) catalyzes C14-demethylation of lanosterol to produce 4,4'-dimethyl cholesta-8,14,24-triene-3-beta-ol, which is critical for ergosterol biosynthesis. The C-14 reductase ERG24 reduces the C14=C15 double bond of 4,4-dimethyl-cholesta-8,14,24-trienol to produce 4,4-dimethyl-cholesta-8,24-dienol. 4,4-dimethyl-cholesta-8,24-dienol is substrate of the C-4 demethylation complex ERG25-ERG26-ERG27 in which ERG25 catalyzes the three-step monooxygenation required for the demethylation of 4,4-dimethyl and 4alpha-methylsterols, ERG26 catalyzes the oxidative decarboxylation that results in a reduction of the 3-beta-hydroxy group at the C-3 carbon to an oxo group, and ERG27 is responsible for the reduction of the keto group on the C-3. ERG28 has a role as a scaffold to help anchor ERG25, ERG26 and ERG27 to the endoplasmic reticulum and ERG29 regulates the activity of the iron-containing C4-methylsterol oxidase ERG25. Then, the sterol 24-C-methyltransferase ERG6 catalyzes the methyl transfer from S-adenosyl-methionine to the C-24 of zymosterol to form fecosterol. The C-8 sterol isomerase ERG2 catalyzes the reaction which results in unsaturation at C-7 in the B ring of sterols and thus converts fecosterol to episterol. The sterol-C5-desaturase ERG3 then catalyzes the introduction of a C-5 double bond in the B ring to produce 5-dehydroepisterol. The C-22 sterol desaturase ERG5 further converts 5-dehydroepisterol into ergosta-5,7,22,24(28)-tetraen-3beta-ol by forming the C-22(23) double bond in the sterol side chain. Finally, ergosta-5,7,22,24(28)-tetraen-3beta-ol is substrate of the C-24(28) sterol reductase ERG4 to produce ergosterol. This is Delta(14)-sterol reductase ERG24 from Candida albicans (strain SC5314 / ATCC MYA-2876) (Yeast).